The primary structure comprises 70 residues: Exodeoxyribonuclease 7 small subunit (70 aa).

Belongs to the XseB family. In terms of assembly, heterooligomer composed of large and small subunits.

It localises to the cytoplasm. The catalysed reaction is Exonucleolytic cleavage in either 5'- to 3'- or 3'- to 5'-direction to yield nucleoside 5'-phosphates.. Bidirectionally degrades single-stranded DNA into large acid-insoluble oligonucleotides, which are then degraded further into small acid-soluble oligonucleotides. The polypeptide is Exodeoxyribonuclease 7 small subunit (Streptococcus gordonii (strain Challis / ATCC 35105 / BCRC 15272 / CH1 / DL1 / V288)).